Here is a 331-residue protein sequence, read N- to C-terminus: ADP,ATP carrier protein 2, mitochondrial (331 aa).

3 Solcar repeats span residues 29–122, 134–226, and 238–320; these read KNFA…FKRM, KWFG…LKPV, and ASFA…LQIL. 5 helical membrane passes run 31-58, 99-123, 132-152, 202-223, and 237-257; these read FAID…VKLL, TANV…KRMF, YWKW…SSLF, FNIS…YDSL, and FASF…SYPI. Residues Arg104 and Lys116 each contribute to the ADP site. Arg261 lines the ADP pocket. Residues 261–266 form an important for transport activity region; it reads RRRMMM. The short motif at 261-266 is the Nucleotide carrier signature motif element; it reads RRRMMM. A helical transmembrane segment spans residues 297–317; that stretch reads AGANILRAIAGAGVLSGYDQL.

Belongs to the mitochondrial carrier (TC 2.A.29) family. Monomer.

Its subcellular location is the mitochondrion inner membrane. It catalyses the reaction ADP(in) + ATP(out) = ADP(out) + ATP(in). Its activity is regulated as follows. The matrix-open state (m-state) is inhibited by the membrane-permeable bongkrekic acid (BKA). The cytoplasmic-open state (c-state) is inhibited by the membrane-impermeable toxic inhibitor carboxyatractyloside (CATR). Functionally, ADP:ATP antiporter that mediates import of ADP into the mitochondrial matrix for ATP synthesis, and export of ATP out to fuel the cell. Cycles between the cytoplasmic-open state (c-state) and the matrix-open state (m-state): operates by the alternating access mechanism with a single substrate-binding site intermittently exposed to either the cytosolic (c-state) or matrix (m-state) side of the inner mitochondrial membrane. The sequence is that of ADP,ATP carrier protein 2, mitochondrial (ANT-G2) from Triticum aestivum (Wheat).